A 664-amino-acid polypeptide reads, in one-letter code: Macoilin (664 aa).

A run of 4 helical transmembrane segments spans residues 28–48 (TFLY…DFVL), 75–95 (AFSV…LLFI), 120–140 (VCLP…AIRF), and 154–174 (FAAH…KSYV). The segment covering 253 to 265 (REKGKEKDKDAKK) has biased composition (basic and acidic residues). Positions 253–274 (REKGKEKDKDAKKHNLGINNNN) are disordered. Serine 305 carries the phosphoserine modification. A compositionally biased stretch (polar residues) spans 320–348 (KNYKNASGVVNSSPRSHSATNGSIPSSSS). Residues 320–367 (KNYKNASGVVNSSPRSHSATNGSIPSSSSKNEKKQKCTSKSPSAHKDL) are disordered. An N-linked (GlcNAc...) asparagine glycan is attached at asparagine 324. The residue at position 332 (serine 332) is a Phosphoserine. N-linked (GlcNAc...) asparagine glycosylation is found at asparagine 340 and asparagine 452. Phosphoserine occurs at positions 631 and 634. A disordered region spans residues 631-664 (SPLSPVSPHYSSKFVETSPSGLDPNASVYQPLKK). Residue asparagine 655 is glycosylated (N-linked (GlcNAc...) asparagine).

Belongs to the macoilin family.

The protein resides in the rough endoplasmic reticulum membrane. The protein localises to the nucleus membrane. Its function is as follows. Plays a role in the regulation of neuronal activity. The protein is Macoilin (MACO1) of Bos taurus (Bovine).